The chain runs to 771 residues: Post-GPI attachment to proteins factor 6 (771 aa).

Residues 1 to 34 (MGRAGTGTGGEAVAAVVAGPLLLLLLARPPPASA) form the signal peptide. Residues 35–545 (GYSGKSEVGL…STAQTVAQQR (511 aa)) are Extracellular-facing. Asn144 carries an N-linked (GlcNAc...) asparagine glycan. Residues 322-343 (FNASSGLLSPSPDHQDLGRSGR) form a disordered region. Residues 334-343 (DHQDLGRSGR) show a composition bias toward basic and acidic residues. 2 N-linked (GlcNAc...) asparagine glycosylation sites follow: Asn407 and Asn431. An EGF-like domain is found at 497–533 (PCLNDCGPYGQCLLLRRHSYLYASCSCKAGWRGWSCT). Disulfide bonds link Cys498-Cys508, Cys502-Cys521, and Cys523-Cys532. The helical transmembrane segment at 546–566 (AATLLLTLSNLMFLAPIAVSV) threads the bilayer. Over 567–568 (RR) the chain is Cytoplasmic. The chain crosses the membrane as a helical span at residues 569–589 (FFLVEASVYAYTMFFSTFYHA). Topologically, residues 590–605 (CDQPGEAVLCILSYDT) are extracellular. A helical transmembrane segment spans residues 606–626 (LQYCDFLGSGAAIWVTILCMA). Residues 627–629 (RLK) lie on the Cytoplasmic side of the membrane. Residues 630-650 (TVLKYVLFLLGTLVIAMSLQL) form a helical membrane-spanning segment. At 651–653 (DRR) the chain is on the extracellular side. Residues 654 to 674 (GMWNMLGPCLFAFVIMASMWA) traverse the membrane as a helical segment. Topologically, residues 675–690 (YRCGHRRQCYPTSWQR) are cytoplasmic. The chain crosses the membrane as a helical span at residues 691–711 (WAFYLLPGVSMASVGIAIYTS). The Extracellular portion of the chain corresponds to 712–717 (MMTSDN). Residues 718–738 (YYYTHSIWHILLAGSAALLLP) traverse the membrane as a helical segment. At 739-771 (PPDQPAEPWACSQKFPCHYQICKNDREELYAVT) the chain is on the cytoplasmic side.

Belongs to the TMEM8 family. In terms of processing, glycosylated. As to expression, expressed in pancreas, placenta, spleen, liver, kidney, bone marrow, peripheral blood leukocytes and tonsil.

It is found in the cell membrane. The protein resides in the lysosome membrane. It carries out the reaction a 1,2-diacyl-sn-glycero-3-phosphocholine + H2O = a 1-acyl-sn-glycero-3-phosphocholine + a fatty acid + H(+). Involved in the lipid remodeling steps of GPI-anchor maturation. Lipid remodeling steps consist in the generation of 2 saturated fatty chains at the sn-2 position of GPI-anchor proteins (GPI-AP). Has phospholipase A2 activity that removes an acyl-chain at the sn-2 position of GPI-anchors during the remodeling of GPI. Required for the shedding of the GPI-AP CRIPTO, but not CFC1, at the cell surface. Shedding of CRIPTO modulates Nodal signaling by allowing soluble CRIPTO to act as a Nodal coreceptor on other cells. Also indirectly involved in the translocation of RAC1 from the cytosol to the plasma membrane by maintaining the steady state amount of CAV1-enriched plasma membrane subdomains, stabilizing RAC1 at the plasma membrane. In contrast to myomaker (TMEM8C), has no fusogenic activity. This Homo sapiens (Human) protein is Post-GPI attachment to proteins factor 6.